A 119-amino-acid chain; its full sequence is Large ribosomal subunit protein bL20c (119 aa).

It belongs to the bacterial ribosomal protein bL20 family.

It is found in the plastid. The protein resides in the chloroplast. Its function is as follows. Binds directly to 23S ribosomal RNA and is necessary for the in vitro assembly process of the 50S ribosomal subunit. It is not involved in the protein synthesizing functions of that subunit. In Triticum aestivum (Wheat), this protein is Large ribosomal subunit protein bL20c.